Reading from the N-terminus, the 95-residue chain is Exodeoxyribonuclease 7 small subunit (95 aa).

A compositionally biased stretch (basic and acidic residues) spans 62–83; sequence LTKDESKKTNKTGFRGESKTTE. The disordered stretch occupies residues 62 to 95; that stretch reads LTKDESKKTNKTGFRGESKTTETKNNTAQEEDLF.

The protein belongs to the XseB family. Heterooligomer composed of large and small subunits.

It is found in the cytoplasm. The catalysed reaction is Exonucleolytic cleavage in either 5'- to 3'- or 3'- to 5'-direction to yield nucleoside 5'-phosphates.. Its function is as follows. Bidirectionally degrades single-stranded DNA into large acid-insoluble oligonucleotides, which are then degraded further into small acid-soluble oligonucleotides. This chain is Exodeoxyribonuclease 7 small subunit, found in Leptospira interrogans serogroup Icterohaemorrhagiae serovar copenhageni (strain Fiocruz L1-130).